Reading from the N-terminus, the 191-residue chain is Protein GrpE (191 aa).

Residues 1–13 (MSEKKNKKEKLAE) are compositionally biased toward basic and acidic residues. Residues 1–40 (MSEKKNKKEKLAEEIEQEELNSLDESVETVEEEATEETLT) form a disordered region. Residues 14 to 40 (EIEQEELNSLDESVETVEEEATEETLT) show a composition bias toward acidic residues.

Belongs to the GrpE family. Homodimer.

The protein resides in the cytoplasm. Its function is as follows. Participates actively in the response to hyperosmotic and heat shock by preventing the aggregation of stress-denatured proteins, in association with DnaK and GrpE. It is the nucleotide exchange factor for DnaK and may function as a thermosensor. Unfolded proteins bind initially to DnaJ; upon interaction with the DnaJ-bound protein, DnaK hydrolyzes its bound ATP, resulting in the formation of a stable complex. GrpE releases ADP from DnaK; ATP binding to DnaK triggers the release of the substrate protein, thus completing the reaction cycle. Several rounds of ATP-dependent interactions between DnaJ, DnaK and GrpE are required for fully efficient folding. This chain is Protein GrpE, found in Listeria innocua serovar 6a (strain ATCC BAA-680 / CLIP 11262).